Consider the following 161-residue polypeptide: Ribonuclease P protein component (161 aa).

The protein belongs to the RnpA family. In terms of assembly, consists of a catalytic RNA component (M1 or rnpB) and a protein subunit.

It catalyses the reaction Endonucleolytic cleavage of RNA, removing 5'-extranucleotides from tRNA precursor.. In terms of biological role, RNaseP catalyzes the removal of the 5'-leader sequence from pre-tRNA to produce the mature 5'-terminus. It can also cleave other RNA substrates such as 4.5S RNA. The protein component plays an auxiliary but essential role in vivo by binding to the 5'-leader sequence and broadening the substrate specificity of the ribozyme. In Helicobacter pylori (strain J99 / ATCC 700824) (Campylobacter pylori J99), this protein is Ribonuclease P protein component.